A 98-amino-acid chain; its full sequence is MPSISINIILAFAAALLGMLMFRSHMMSSLLCLEGMMLSMFILSTLIISNTQLTMSFMMPIMLLVFSACEAAIGLALLVMVSNTYGLDYIQNLNLLKC.

3 helical membrane passes run 2–22 (PSISINIILAFAAALLGMLMF), 28–48 (SSLLCLEGMMLSMFILSTLII), and 61–81 (IMLLVFSACEAAIGLALLVMV).

The protein belongs to the complex I subunit 4L family. Core subunit of respiratory chain NADH dehydrogenase (Complex I) which is composed of 45 different subunits.

The protein resides in the mitochondrion inner membrane. The catalysed reaction is a ubiquinone + NADH + 5 H(+)(in) = a ubiquinol + NAD(+) + 4 H(+)(out). Its function is as follows. Core subunit of the mitochondrial membrane respiratory chain NADH dehydrogenase (Complex I) which catalyzes electron transfer from NADH through the respiratory chain, using ubiquinone as an electron acceptor. Part of the enzyme membrane arm which is embedded in the lipid bilayer and involved in proton translocation. In Allocebus trichotis (Hairy-eared dwarf lemur), this protein is NADH-ubiquinone oxidoreductase chain 4L (MT-ND4L).